Here is a 106-residue protein sequence, read N- to C-terminus: Large ribosomal subunit protein uL24 (106 aa).

The segment covering 84–97 (EKIGRELGAKEKAR) has biased composition (basic and acidic residues). The interval 84 to 106 (EKIGRELGAKEKARLQKRKAAAK) is disordered.

It belongs to the universal ribosomal protein uL24 family. As to quaternary structure, part of the 50S ribosomal subunit.

Functionally, one of two assembly initiator proteins, it binds directly to the 5'-end of the 23S rRNA, where it nucleates assembly of the 50S subunit. In terms of biological role, one of the proteins that surrounds the polypeptide exit tunnel on the outside of the subunit. The chain is Large ribosomal subunit protein uL24 from Anaeromyxobacter sp. (strain K).